The chain runs to 306 residues: MWRQSMITVLSGGTGTPKLLQGLVRVVDPEEITVIVNTVENGYLSGVYVAPDVDTVLYTLAGIINEETWYGVEGDTFITHETLRELGCPELLRIGDRDRAFKIQKTLLLGEMPLHRAVEIQSRALGVESRVLPMSNEDSDIVIVTDEGDMEFHEFLVERRSEPGVLDVRFSRVKPAPGVLDAIESADMVILGPSNPVTSIGPIINMEGVTDSLRKVNVSAVSPFTGGRPFSGPAGKFMEAKGYDASSLGVAEIYADFLDRLVIDETDSDLKGEIEKLIKEVTITKTNMENIGDKIMLARILLGEIL.

2 residues coordinate 7,8-didemethyl-8-hydroxy-5-deazariboflavin: aspartate 54 and arginine 93.

It belongs to the CofD family. As to quaternary structure, homodimer. Mg(2+) is required as a cofactor.

The enzyme catalyses (2S)-lactyl-2-diphospho-5'-guanosine + 7,8-didemethyl-8-hydroxy-5-deazariboflavin = oxidized coenzyme F420-0 + GMP + H(+). The protein operates within cofactor biosynthesis; coenzyme F420 biosynthesis. Functionally, catalyzes the transfer of the 2-phospholactate moiety from (2S)-lactyl-2-diphospho-5'-guanosine to 7,8-didemethyl-8-hydroxy-5-deazariboflavin (FO) with the formation of oxidized coenzyme F420-0 and GMP. The sequence is that of 2-phospho-L-lactate transferase from Methanothermobacter thermautotrophicus (strain ATCC 29096 / DSM 1053 / JCM 10044 / NBRC 100330 / Delta H) (Methanobacterium thermoautotrophicum).